A 285-amino-acid polypeptide reads, in one-letter code: Putative sugar uptake protein lp_2503 (285 aa).

The next 9 helical transmembrane spans lie at G2–G21, T31–V48, S55–Q72, G112–L134, N147–V169, V179–F196, N209–A228, A233–G255, and V264–M283.

It belongs to the GRP transporter (TC 2.A.7.5) family.

It is found in the cell membrane. This Lactiplantibacillus plantarum (strain ATCC BAA-793 / NCIMB 8826 / WCFS1) (Lactobacillus plantarum) protein is Putative sugar uptake protein lp_2503.